A 570-amino-acid chain; its full sequence is Sulfite reductase [NADPH] hemoprotein beta-component (570 aa).

Positions 434, 440, 479, and 483 each coordinate [4Fe-4S] cluster. C483 is a binding site for siroheme.

It belongs to the nitrite and sulfite reductase 4Fe-4S domain family. As to quaternary structure, alpha(8)-beta(8). The alpha component is a flavoprotein, the beta component is a hemoprotein. The cofactor is siroheme. [4Fe-4S] cluster serves as cofactor.

It carries out the reaction hydrogen sulfide + 3 NADP(+) + 3 H2O = sulfite + 3 NADPH + 4 H(+). The protein operates within sulfur metabolism; hydrogen sulfide biosynthesis; hydrogen sulfide from sulfite (NADPH route): step 1/1. Component of the sulfite reductase complex that catalyzes the 6-electron reduction of sulfite to sulfide. This is one of several activities required for the biosynthesis of L-cysteine from sulfate. This chain is Sulfite reductase [NADPH] hemoprotein beta-component, found in Cronobacter sakazakii (strain ATCC BAA-894) (Enterobacter sakazakii).